Reading from the N-terminus, the 521-residue chain is Bifunctional purine biosynthesis protein PurH (521 aa).

The region spanning 1–149 (MSDPVIKRAL…KNNESVTVVT (149 aa)) is the MGS-like domain.

It belongs to the PurH family.

The enzyme catalyses (6R)-10-formyltetrahydrofolate + 5-amino-1-(5-phospho-beta-D-ribosyl)imidazole-4-carboxamide = 5-formamido-1-(5-phospho-D-ribosyl)imidazole-4-carboxamide + (6S)-5,6,7,8-tetrahydrofolate. It catalyses the reaction IMP + H2O = 5-formamido-1-(5-phospho-D-ribosyl)imidazole-4-carboxamide. The protein operates within purine metabolism; IMP biosynthesis via de novo pathway; 5-formamido-1-(5-phospho-D-ribosyl)imidazole-4-carboxamide from 5-amino-1-(5-phospho-D-ribosyl)imidazole-4-carboxamide (10-formyl THF route): step 1/1. Its pathway is purine metabolism; IMP biosynthesis via de novo pathway; IMP from 5-formamido-1-(5-phospho-D-ribosyl)imidazole-4-carboxamide: step 1/1. The chain is Bifunctional purine biosynthesis protein PurH from Chlorobium phaeobacteroides (strain DSM 266 / SMG 266 / 2430).